The following is a 310-amino-acid chain: MEPGNHTAVTKFILLGLTDDPTLCVIFFVFFLGIYIVTLVGNISIINLVRSCPQLQTPMYMFLSHLAFVDIGYSTSVTPIMLIGFIVHETGLPVHACEAQLCSVVTFGTAECFLLAAMAYDRYVAICSPLLYSTHMSSQICLLLVGASYVGGCVNAWTFTGCLLSLSFCGPNKIDHFFCDFSPLLKLSCSDVSIIGIIPSISAGSIIVVTVFVISVSYIYILITILKMRSTEGRHKAFSTCTSHLTAVTLYYGTITFIYVMPKSSYSTKQNRVVSLFYTVVIPMLNPLIYSLRNRDVKEALRKATLRIYS.

At 1 to 25 the chain is on the extracellular side; sequence MEPGNHTAVTKFILLGLTDDPTLCV. N-linked (GlcNAc...) asparagine glycosylation occurs at N5. The helical transmembrane segment at 26 to 46 threads the bilayer; the sequence is IFFVFFLGIYIVTLVGNISII. Over 47-54 the chain is Cytoplasmic; it reads NLVRSCPQ. Residues 55 to 75 form a helical membrane-spanning segment; the sequence is LQTPMYMFLSHLAFVDIGYST. Residues 76-99 lie on the Extracellular side of the membrane; the sequence is SVTPIMLIGFIVHETGLPVHACEA. An intrachain disulfide couples C97 to C189. Residues 100 to 120 form a helical membrane-spanning segment; that stretch reads QLCSVVTFGTAECFLLAAMAY. Topologically, residues 121-133 are cytoplasmic; the sequence is DRYVAICSPLLYS. A helical transmembrane segment spans residues 134 to 154; it reads THMSSQICLLLVGASYVGGCV. Residues 155 to 196 lie on the Extracellular side of the membrane; that stretch reads NAWTFTGCLLSLSFCGPNKIDHFFCDFSPLLKLSCSDVSIIG. Residues 197–217 form a helical membrane-spanning segment; that stretch reads IIPSISAGSIIVVTVFVISVS. Over 218 to 237 the chain is Cytoplasmic; sequence YIYILITILKMRSTEGRHKA. A helical membrane pass occupies residues 238–258; it reads FSTCTSHLTAVTLYYGTITFI. At 259–271 the chain is on the extracellular side; sequence YVMPKSSYSTKQN. The chain crosses the membrane as a helical span at residues 272-292; that stretch reads RVVSLFYTVVIPMLNPLIYSL. Residues 293-310 are Cytoplasmic-facing; the sequence is RNRDVKEALRKATLRIYS.

This sequence belongs to the G-protein coupled receptor 1 family.

The protein resides in the cell membrane. Potential odorant receptor. This chain is Olfactory receptor 5P1, found in Mus musculus (Mouse).